The primary structure comprises 259 residues: Global transcriptional regulator CodY (259 aa).

Positions 1–155 (MNLLEKTRQL…SATVVGMEIL (155 aa)) are GAF domain. Positions 203-222 (ASKIADRVGITRSVIVNALR) form a DNA-binding region, H-T-H motif.

The protein belongs to the CodY family.

The protein localises to the cytoplasm. In terms of biological role, DNA-binding global transcriptional regulator which is involved in the adaptive response to starvation and acts by directly or indirectly controlling the expression of numerous genes in response to nutrient availability. During rapid exponential growth, CodY is highly active and represses genes whose products allow adaptation to nutrient depletion. The chain is Global transcriptional regulator CodY from Exiguobacterium sp. (strain ATCC BAA-1283 / AT1b).